A 421-amino-acid chain; its full sequence is Acyl-coenzyme A thioesterase 1 (421 aa).

Catalysis depends on charge relay system residues serine 232, aspartate 326, and histidine 360.

The protein belongs to the C/M/P thioester hydrolase family. Monomer.

The protein resides in the cytoplasm. It is found in the cytosol. The enzyme catalyses hexadecanoyl-CoA + H2O = hexadecanoate + CoA + H(+). It catalyses the reaction decanoyl-CoA + H2O = decanoate + CoA + H(+). It carries out the reaction dodecanoyl-CoA + H2O = dodecanoate + CoA + H(+). The catalysed reaction is tetradecanoyl-CoA + H2O = tetradecanoate + CoA + H(+). The enzyme catalyses octadecanoyl-CoA + H2O = octadecanoate + CoA + H(+). It catalyses the reaction eicosanoyl-CoA + H2O = eicosanoate + CoA + H(+). It carries out the reaction (9Z)-octadecenoyl-CoA + H2O = (9Z)-octadecenoate + CoA + H(+). The catalysed reaction is (9Z)-hexadecenoyl-CoA + H2O = (9Z)-hexadecenoate + CoA + H(+). The enzyme catalyses (9E)-octadecenoyl-CoA + H2O = (9E)-octadecenoate + CoA + H(+). It participates in lipid metabolism; fatty acid metabolism. In terms of biological role, catalyzes the hydrolysis of acyl-CoAs into free fatty acids and coenzyme A (CoASH), regulating their respective intracellular levels. More active towards saturated and unsaturated long chain fatty acyl-CoAs (C12-C20). The protein is Acyl-coenzyme A thioesterase 1 (ACOT1) of Homo sapiens (Human).